The following is a 228-amino-acid chain: Ribosomal RNA small subunit methyltransferase G (228 aa).

S-adenosyl-L-methionine contacts are provided by residues glycine 89, leucine 94, 140–141, and arginine 159; that span reads VE.

Belongs to the methyltransferase superfamily. RNA methyltransferase RsmG family.

The protein localises to the cytoplasm. The catalysed reaction is guanosine(527) in 16S rRNA + S-adenosyl-L-methionine = N(7)-methylguanosine(527) in 16S rRNA + S-adenosyl-L-homocysteine. Specifically methylates the N7 position of guanine in position 527 of 16S rRNA. This is Ribosomal RNA small subunit methyltransferase G from Burkholderia cenocepacia (strain ATCC BAA-245 / DSM 16553 / LMG 16656 / NCTC 13227 / J2315 / CF5610) (Burkholderia cepacia (strain J2315)).